The sequence spans 242 residues: Ribosomal RNA small subunit methyltransferase G (242 aa).

Residues G81, F86, 104–106, 132–133, and R151 contribute to the S-adenosyl-L-methionine site; these read DST and AE.

The protein belongs to the methyltransferase superfamily. RNA methyltransferase RsmG family.

It is found in the cytoplasm. Its function is as follows. Specifically methylates the N7 position of a guanine in 16S rRNA. This is Ribosomal RNA small subunit methyltransferase G from Synechococcus elongatus (strain ATCC 33912 / PCC 7942 / FACHB-805) (Anacystis nidulans R2).